The chain runs to 85 residues: Conotoxin Lt28.5 (85 aa).

A signal peptide spans 1–21 (MPKLEMMLLVLLILPLCYIDA). Residues 22-40 (VGPPPPWNMEDEIIEHWQK) constitute a propeptide that is removed on maturation.

Belongs to the conotoxin D superfamily. In terms of processing, contains 5 disulfide bonds. Expressed by the venom duct.

It localises to the secreted. In terms of biological role, probable neurotoxin. The chain is Conotoxin Lt28.5 from Conus litteratus (Lettered cone).